The primary structure comprises 183 residues: MSVVVGGVEYSLNNWAKYEIKRRAAELESVNYYPRCEYIMPEDIVVSILGSKPNCPFLEALKRFHDFLNKRRIIFKEGYLVIPWMGAQDVADMIHHVENRINLGHLEDLAHMLKLITYHKSLDTSINQSFENLYAFKFPDANIETHELKLIRQLEKKMYGYILRLEKLQTMLTFYIEFLLKQV.

The protein belongs to the asfivirus S183L family.

This is an uncharacterized protein from African swine fever virus (isolate Pig/Kenya/KEN-50/1950) (ASFV).